Here is a 625-residue protein sequence, read N- to C-terminus: FMRFamide-activated amiloride-sensitive sodium channel (625 aa).

The Cytoplasmic portion of the chain corresponds to 1 to 67; that stretch reads MKYTSAATKP…IVTSRDTKRK (67 aa). The helical transmembrane segment at 68 to 89 threads the bilayer; it reads VIWALLVIAGFTAATLQLSLLV. The Extracellular segment spans residues 90-536; it reads RKYLQFQVVE…LADLFADIGG (447 aa). 7 N-linked (GlcNAc...) asparagine glycosylation sites follow: asparagine 134, asparagine 196, asparagine 303, asparagine 349, asparagine 365, asparagine 372, and asparagine 473. A helical membrane pass occupies residues 537-557; the sequence is TLGLWMGISVLTIMELIELVI. Topologically, residues 558–625 are cytoplasmic; it reads RLTGLVFNSE…DFRRGVESPV (68 aa). The interval 570–591 is disordered; the sequence is LPRGPTTVNNNNGSNNHSQSTS. Positions 575-591 are enriched in low complexity; sequence TTVNNNNGSNNHSQSTS.

Belongs to the amiloride-sensitive sodium channel (TC 1.A.6) family. As to expression, muscle and nervous tissue.

Its subcellular location is the membrane. FMRFamide-gated ionotropic receptor. This Cornu aspersum (Brown garden snail) protein is FMRFamide-activated amiloride-sensitive sodium channel.